The following is a 428-amino-acid chain: Phosphoribosylamine--glycine ligase (428 aa).

The 208-residue stretch at 109-316 (KDFLHRHGIP…LVELCLAALD (208 aa)) folds into the ATP-grasp domain. Residue 135–196 (LRQVGAPVVV…EEFLTGEEAS (62 aa)) participates in ATP binding. A disordered region spans residues 211 to 235 (SSQDHKARDDGDRGPNTGGMGAYSP). Positions 213-223 (QDHKARDDGDR) are enriched in basic and acidic residues. 2 residues coordinate Mg(2+): Glu286 and Asn288.

This sequence belongs to the GARS family. Mg(2+) is required as a cofactor. Mn(2+) serves as cofactor.

It carries out the reaction 5-phospho-beta-D-ribosylamine + glycine + ATP = N(1)-(5-phospho-beta-D-ribosyl)glycinamide + ADP + phosphate + H(+). The protein operates within purine metabolism; IMP biosynthesis via de novo pathway; N(1)-(5-phospho-D-ribosyl)glycinamide from 5-phospho-alpha-D-ribose 1-diphosphate: step 2/2. The polypeptide is Phosphoribosylamine--glycine ligase (purD) (Allochromatium vinosum (strain ATCC 17899 / DSM 180 / NBRC 103801 / NCIMB 10441 / D) (Chromatium vinosum)).